A 308-amino-acid chain; its full sequence is Phenylcoumaran benzylic ether reductase TP7 (308 aa).

NADP(+) is bound by residues 11-17 (GGTGYIG), arginine 36, and lysine 45. Lysine 133 (proton acceptor) is an active-site residue. Arginine 137 lines the NADP(+) pocket.

Belongs to the NmrA-type oxidoreductase family. Isoflavone reductase subfamily. As to expression, expressed in flowers. Expressed at low levels in stems.

It catalyses the reaction (-)-dehydrodiconiferyl alcohol + NADPH + H(+) = (S)-isodihydrodehydrodiconiferyl alcohol + NADP(+). The catalysed reaction is (+)-dehydrodiconiferyl alcohol + NADPH + H(+) = (R)-isodihydrodehydrodiconiferyl alcohol + NADP(+). The enzyme catalyses (2R,3S)-dihydrodehydrodiconiferyl alcohol + NADPH + H(+) = (S)-tetrahydrodehydrodiconiferyl alcohol + NADP(+). It carries out the reaction (2S,3R)-dihydrodehydrodiconiferyl alcohol + NADPH + H(+) = (R)-tetrahydrodehydrodiconiferyl alcohol + NADP(+). Its function is as follows. Oxidoreductase involved in lignan biosynthesis. Catalyzes the NADPH-dependent reduction of phenylcoumaran benzylic ethers. Converts dehydrodiconiferyl alcohol (DDC) to isodihydrodehydrodiconiferyl alcohol (IDDDC), and dihydrodehydrodiconiferyl alcohol (DDDC) to tetrahydrodehydrodiconiferyl alcohol (TDDC). This Nicotiana tabacum (Common tobacco) protein is Phenylcoumaran benzylic ether reductase TP7.